Here is a 36-residue protein sequence, read N- to C-terminus: Kappa-theraphotoxin-Pg1a (36 aa).

3 cysteine pairs are disulfide-bonded: cysteine 4–cysteine 19, cysteine 11–cysteine 24, and cysteine 18–cysteine 31.

It belongs to the neurotoxin 10 (Hwtx-1) family. 44 (Jztx-4) subfamily. As to expression, expressed by the venom gland.

It localises to the secreted. In terms of biological role, gating modifier of Kv2.1/KCNB1 (IC(50)=5.1 nM), Kv2.2/KCNB2 and Kv4.3/KCND3 channels (IC(50)=39 nM). Acts by shifting the channel activation to more depolarized potentials by stabilizing the resting conformation of the voltage sensor. It completely inhibits opening of the Kv2.1/KCNB1 channel at negative membrane voltages and dramatically shifts channel activation to positive voltages. May act by partitioning into lipid membranes and then by binding the voltage sensor paddle of the channel from a place within the membrane. The sequence is that of Kappa-theraphotoxin-Pg1a from Chilobrachys guangxiensis (Chinese earth tiger tarantula).